Consider the following 250-residue polypeptide: Sulfate transporter CysZ (250 aa).

Helical transmembrane passes span 27-47 (FVVL…YYLF), 64-84 (FLSW…LATF), 150-170 (FLLL…WFLF), and 210-230 (MLVA…PVAV).

This sequence belongs to the CysZ family.

It is found in the cell inner membrane. High affinity, high specificity proton-dependent sulfate transporter, which mediates sulfate uptake. Provides the sulfur source for the cysteine synthesis pathway. The chain is Sulfate transporter CysZ from Vibrio cholerae serotype O1 (strain ATCC 39541 / Classical Ogawa 395 / O395).